A 358-amino-acid polypeptide reads, in one-letter code: Peroxidase 12 (358 aa).

The N-terminal stretch at 1 to 31 (MTKAYSTRVLTFLILISLMAVTLNLFPTVEA) is a signal peptide. Cystine bridges form between Cys53-Cys134, Cys86-Cys91, Cys140-Cys335, and Cys220-Cys247. His84 serves as the catalytic Proton acceptor. Positions 85, 88, 90, 92, and 94 each coordinate Ca(2+). Pro183 lines the substrate pocket. N-linked (GlcNAc...) asparagine glycosylation is found at Asn188 and Asn202. Residue His213 participates in heme b binding. Residue Thr214 coordinates Ca(2+). Asn251 carries an N-linked (GlcNAc...) asparagine glycan. Ca(2+)-binding residues include Asp259, Ser262, and Asp267. Asn334 is a glycosylation site (N-linked (GlcNAc...) asparagine).

It belongs to the peroxidase family. Classical plant (class III) peroxidase subfamily. The cofactor is heme b. Ca(2+) serves as cofactor. Expressed in roots and leaves.

Its subcellular location is the secreted. It localises to the vacuole. It carries out the reaction 2 a phenolic donor + H2O2 = 2 a phenolic radical donor + 2 H2O. In terms of biological role, removal of H(2)O(2), oxidation of toxic reductants, biosynthesis and degradation of lignin, suberization, auxin catabolism, response to environmental stresses such as wounding, pathogen attack and oxidative stress. These functions might be dependent on each isozyme/isoform in each plant tissue. Exhibits a Ca(2+)-pectate binding affinity which could be interpreted in vivo as a specificity to interact with the pectic structure of the cell wall. The chain is Peroxidase 12 (PER12) from Arabidopsis thaliana (Mouse-ear cress).